The following is a 492-amino-acid chain: Ketol-acid reductoisomerase (NADP(+)) (492 aa).

In terms of domain architecture, KARI N-terminal Rossmann spans 15–208; that stretch reads AQLGKCRFMA…GGHRAGVLES (194 aa). NADP(+) is bound by residues 45-48, Arg68, Arg76, Ser78, and 108-110; these read CGAQ and DKQ. The active site involves His132. Gly158 contributes to the NADP(+) binding site. KARI C-terminal knotted domains follow at residues 209-344 and 345-485; these read SFVA…NAPQ and FEGK…MTDM. Mg(2+) is bound by residues Asp217, Glu221, Glu389, and Glu393. Residue Ser414 participates in substrate binding.

Belongs to the ketol-acid reductoisomerase family. Mg(2+) is required as a cofactor.

It catalyses the reaction (2R)-2,3-dihydroxy-3-methylbutanoate + NADP(+) = (2S)-2-acetolactate + NADPH + H(+). It carries out the reaction (2R,3R)-2,3-dihydroxy-3-methylpentanoate + NADP(+) = (S)-2-ethyl-2-hydroxy-3-oxobutanoate + NADPH + H(+). The protein operates within amino-acid biosynthesis; L-isoleucine biosynthesis; L-isoleucine from 2-oxobutanoate: step 2/4. Its pathway is amino-acid biosynthesis; L-valine biosynthesis; L-valine from pyruvate: step 2/4. Its function is as follows. Involved in the biosynthesis of branched-chain amino acids (BCAA). Catalyzes an alkyl-migration followed by a ketol-acid reduction of (S)-2-acetolactate (S2AL) to yield (R)-2,3-dihydroxy-isovalerate. In the isomerase reaction, S2AL is rearranged via a Mg-dependent methyl migration to produce 3-hydroxy-3-methyl-2-ketobutyrate (HMKB). In the reductase reaction, this 2-ketoacid undergoes a metal-dependent reduction by NADPH to yield (R)-2,3-dihydroxy-isovalerate. This chain is Ketol-acid reductoisomerase (NADP(+)), found in Yersinia pseudotuberculosis serotype O:3 (strain YPIII).